We begin with the raw amino-acid sequence, 545 residues long: Ribulokinase (545 aa).

The protein belongs to the ribulokinase family.

It carries out the reaction D-ribulose + ATP = D-ribulose 5-phosphate + ADP + H(+). It catalyses the reaction L-ribulose + ATP = L-ribulose 5-phosphate + ADP + H(+). Its pathway is carbohydrate degradation; L-arabinose degradation via L-ribulose; D-xylulose 5-phosphate from L-arabinose (bacterial route): step 2/3. The protein is Ribulokinase of Staphylococcus aureus (strain MRSA252).